Here is a 330-residue protein sequence, read N- to C-terminus: Phosphate acyltransferase (330 aa).

It belongs to the PlsX family. In terms of assembly, homodimer. Probably interacts with PlsY.

It is found in the cytoplasm. The enzyme catalyses a fatty acyl-[ACP] + phosphate = an acyl phosphate + holo-[ACP]. It participates in lipid metabolism; phospholipid metabolism. Its function is as follows. Catalyzes the reversible formation of acyl-phosphate (acyl-PO(4)) from acyl-[acyl-carrier-protein] (acyl-ACP). This enzyme utilizes acyl-ACP as fatty acyl donor, but not acyl-CoA. The sequence is that of Phosphate acyltransferase from Bacillus licheniformis (strain ATCC 14580 / DSM 13 / JCM 2505 / CCUG 7422 / NBRC 12200 / NCIMB 9375 / NCTC 10341 / NRRL NRS-1264 / Gibson 46).